Reading from the N-terminus, the 984-residue chain is Shutoff protein (984 aa).

Positions Gly131–Pro231 are disordered. Positions Asp137–Pro147 are enriched in acidic residues. The span at Glu148–Asp159 shows a compositional bias: basic and acidic residues. The segment covering Val176–Ser186 has biased composition (acidic residues). Over residues Thr190 to Ala202 the composition is skewed to polar residues. Residues Asp205–Gly216 are compositionally biased toward basic and acidic residues. The segment at Leu411–Leu476 is binding to host EIF4G. An RRM domain is found at Arg479–Ala597. 2 disordered regions span residues Gly810 to Ala853 and Lys876 to Glu984. Tyr812 carries the post-translational modification Phosphotyrosine; by host. A compositionally biased stretch (basic residues) spans Ala913–Thr923. A compositionally biased stretch (low complexity) spans Arg945–Ala958.

Belongs to the adenoviridae shutoff protein family. Monomer. Interacts with hexon protein; this interaction allows chaperoning and trimerization of hexon proteins. Interacts (via N-terminus) with host initiation factor EIF4G (via C-terminus). Interacts (via RRM domain) with viral mRNAs that contain the tripartite leader; this interaction allows ribosome shunting and expression of viral late mRNAs. Post-translationally, might be cleaved by the viral protease. Phosphorylated. Tyrosine phosphorylation enhances preferential binding to tripartite leader mRNAs and allows ribosome shunting. In terms of processing, methylated. Asymmetric dimethylation by host PRMT1 of the Arg/Gly-rich region may regulate shutoff protein binding to hexon and promote the capsid assembly in the nucleus.

Its subcellular location is the host cytoplasm. Its function is as follows. Protein that inhibits host translation while promoting late viral translation by ribosome shunting. Blocks host cap-dependent translation by binding to eIF4G, displacing MKNK1 from cap initiation complexes and preventing EIF4E phosphorylation. Binds to the tripartite leader sequence of viral late mRNAs and recruits host eIF4G, PABPC1/poly-A binding protein and 40S ribosomes subunits on viral mRNAs, allowing ribosome shunting and efficient translation of late viral mRNAs even though conventional translation via ribosome scanning from the cap has been shut off in the host cell. During assembly, acts as a chaperone protein that helps hexon proteins assembly into trimers. The sequence is that of Shutoff protein from Galliformes (FAdV-1).